Here is a 253-residue protein sequence, read N- to C-terminus: 5-oxoprolinase subunit A (253 aa).

Belongs to the LamB/PxpA family. Forms a complex composed of PxpA, PxpB and PxpC.

The catalysed reaction is 5-oxo-L-proline + ATP + 2 H2O = L-glutamate + ADP + phosphate + H(+). In terms of biological role, catalyzes the cleavage of 5-oxoproline to form L-glutamate coupled to the hydrolysis of ATP to ADP and inorganic phosphate. The sequence is that of 5-oxoprolinase subunit A from Chloroflexus aurantiacus (strain ATCC 29364 / DSM 637 / Y-400-fl).